A 246-amino-acid polypeptide reads, in one-letter code: Trypsin V-B (246 aa).

A signal peptide spans 1-15 (MKICIFFTLLGTVAA). Positions 16 to 24 (FPTEDNDDR) are cleaved as a propeptide — activation peptide. One can recognise a Peptidase S1 domain in the interval 25–244 (IVGGYTCQEH…YLNWIQQTVA (220 aa)). Intrachain disulfides connect cysteine 31-cysteine 160, cysteine 49-cysteine 65, cysteine 133-cysteine 233, cysteine 140-cysteine 206, cysteine 171-cysteine 185, and cysteine 196-cysteine 220. Histidine 64 (charge relay system) is an active-site residue. Ca(2+)-binding residues include glutamate 76, asparagine 78, and glutamate 86. The active-site Charge relay system is the aspartate 108. Serine 200 (charge relay system) is an active-site residue.

Belongs to the peptidase S1 family. The cofactor is Ca(2+).

It localises to the secreted. It is found in the extracellular space. It carries out the reaction Preferential cleavage: Arg-|-Xaa, Lys-|-Xaa.. This chain is Trypsin V-B, found in Rattus norvegicus (Rat).